Here is a 305-residue protein sequence, read N- to C-terminus: Glycine--tRNA ligase alpha subunit (305 aa).

It belongs to the class-II aminoacyl-tRNA synthetase family. Tetramer of two alpha and two beta subunits.

It is found in the cytoplasm. The catalysed reaction is tRNA(Gly) + glycine + ATP = glycyl-tRNA(Gly) + AMP + diphosphate. The protein is Glycine--tRNA ligase alpha subunit of Streptococcus pneumoniae (strain CGSP14).